The sequence spans 309 residues: Methionyl-tRNA formyltransferase (309 aa).

Ser109 to Pro112 is a binding site for (6S)-5,6,7,8-tetrahydrofolate.

The protein belongs to the Fmt family.

The catalysed reaction is L-methionyl-tRNA(fMet) + (6R)-10-formyltetrahydrofolate = N-formyl-L-methionyl-tRNA(fMet) + (6S)-5,6,7,8-tetrahydrofolate + H(+). In terms of biological role, attaches a formyl group to the free amino group of methionyl-tRNA(fMet). The formyl group appears to play a dual role in the initiator identity of N-formylmethionyl-tRNA by promoting its recognition by IF2 and preventing the misappropriation of this tRNA by the elongation apparatus. In Clostridium botulinum (strain Alaska E43 / Type E3), this protein is Methionyl-tRNA formyltransferase.